The primary structure comprises 83 residues: Phosphoribosylformylglycinamidine synthase subunit PurS (83 aa).

It belongs to the PurS family. In terms of assembly, homodimer. Part of the FGAM synthase complex composed of 1 PurL, 1 PurQ and 2 PurS subunits.

The protein resides in the cytoplasm. The catalysed reaction is N(2)-formyl-N(1)-(5-phospho-beta-D-ribosyl)glycinamide + L-glutamine + ATP + H2O = 2-formamido-N(1)-(5-O-phospho-beta-D-ribosyl)acetamidine + L-glutamate + ADP + phosphate + H(+). Its pathway is purine metabolism; IMP biosynthesis via de novo pathway; 5-amino-1-(5-phospho-D-ribosyl)imidazole from N(2)-formyl-N(1)-(5-phospho-D-ribosyl)glycinamide: step 1/2. In terms of biological role, part of the phosphoribosylformylglycinamidine synthase complex involved in the purines biosynthetic pathway. Catalyzes the ATP-dependent conversion of formylglycinamide ribonucleotide (FGAR) and glutamine to yield formylglycinamidine ribonucleotide (FGAM) and glutamate. The FGAM synthase complex is composed of three subunits. PurQ produces an ammonia molecule by converting glutamine to glutamate. PurL transfers the ammonia molecule to FGAR to form FGAM in an ATP-dependent manner. PurS interacts with PurQ and PurL and is thought to assist in the transfer of the ammonia molecule from PurQ to PurL. In Methanocaldococcus jannaschii (strain ATCC 43067 / DSM 2661 / JAL-1 / JCM 10045 / NBRC 100440) (Methanococcus jannaschii), this protein is Phosphoribosylformylglycinamidine synthase subunit PurS.